Consider the following 269-residue polypeptide: MIKTNKKTPKNIILSLENVSISYGTFEAVRNVFCNFKKGNITSLIGPSGCGKSTVLRSLNRMNDLIPNCSLKGTVLFDGTNIYDKRVDPVEVRRRIGMVFQQPNPFPKSIYENIAFGARINGFTGDMDELVESSLRKAALWDECKDKLNDSGYSLSGGQQQRLCIARTIAIEPEIILMDEPCSALDPISTLKIEETMHELKMNYTIIIVTHNMQQALRVSDMTAFFNAVEYEDGDGGKVGYLAEFNSTKKIFNSPKEKTTQEYISGKFG.

The region spanning 14–253 (LSLENVSISY…EFNSTKKIFN (240 aa)) is the ABC transporter domain. Residue 46–53 (GPSGCGKS) participates in ATP binding.

It belongs to the ABC transporter superfamily. Phosphate importer (TC 3.A.1.7) family. In terms of assembly, the complex is composed of two ATP-binding proteins (PstB), two transmembrane proteins (PstC and PstA) and a solute-binding protein (PstS).

The protein localises to the cell inner membrane. It catalyses the reaction phosphate(out) + ATP + H2O = ADP + 2 phosphate(in) + H(+). Functionally, part of the ABC transporter complex PstSACB involved in phosphate import. Responsible for energy coupling to the transport system. This chain is Phosphate import ATP-binding protein PstB, found in Prochlorococcus marinus (strain MIT 9312).